The sequence spans 288 residues: Dichloromethane dehalogenase (288 aa).

The region spanning 12–94 is the GST N-terminal domain; that stretch reads KTLRLLYHPA…YVNEKFDGAG (83 aa). Positions 100–252 constitute a GST C-terminal domain; sequence GTQERAQINQ…ASMFKRKTAV (153 aa).

It belongs to the GST superfamily. As to quaternary structure, homohexamer.

The protein localises to the cytoplasm. The catalysed reaction is dichloromethane + H2O = formaldehyde + 2 chloride + 2 H(+). The protein operates within xenobiotic degradation; dichloromethane degradation. In Methylorubrum extorquens (strain DSM 6343 / CIP 106787 / DM4) (Methylobacterium extorquens), this protein is Dichloromethane dehalogenase (dcmA).